The primary structure comprises 670 residues: Methionine--tRNA ligase (670 aa).

The 'HIGH' region motif lies at 14–24 (PYANGHLHLGH). C145, C148, C158, and C161 together coordinate Zn(2+). Residues 330–334 (KMSKS) carry the 'KMSKS' region motif. K333 is a binding site for ATP. The tRNA-binding domain maps to 570–670 (DFAKVDLRIA…AGALPGMKVK (101 aa)).

This sequence belongs to the class-I aminoacyl-tRNA synthetase family. MetG type 1 subfamily. As to quaternary structure, homodimer. Zn(2+) serves as cofactor.

The protein localises to the cytoplasm. It carries out the reaction tRNA(Met) + L-methionine + ATP = L-methionyl-tRNA(Met) + AMP + diphosphate. In terms of biological role, is required not only for elongation of protein synthesis but also for the initiation of all mRNA translation through initiator tRNA(fMet) aminoacylation. The sequence is that of Methionine--tRNA ligase from Legionella pneumophila (strain Paris).